The primary structure comprises 240 residues: UDP-2,3-diacylglucosamine hydrolase (240 aa).

Residues aspartate 8, histidine 10, aspartate 41, asparagine 79, and histidine 114 each contribute to the Mn(2+) site. Position 79–80 (79–80 (NR)) interacts with substrate. Substrate-binding residues include aspartate 122, serine 160, asparagine 164, lysine 167, and histidine 195. The Mn(2+) site is built by histidine 195 and histidine 197.

It belongs to the LpxH family. Mn(2+) is required as a cofactor.

The protein resides in the cell inner membrane. It catalyses the reaction UDP-2-N,3-O-bis[(3R)-3-hydroxytetradecanoyl]-alpha-D-glucosamine + H2O = 2-N,3-O-bis[(3R)-3-hydroxytetradecanoyl]-alpha-D-glucosaminyl 1-phosphate + UMP + 2 H(+). It participates in glycolipid biosynthesis; lipid IV(A) biosynthesis; lipid IV(A) from (3R)-3-hydroxytetradecanoyl-[acyl-carrier-protein] and UDP-N-acetyl-alpha-D-glucosamine: step 4/6. Functionally, hydrolyzes the pyrophosphate bond of UDP-2,3-diacylglucosamine to yield 2,3-diacylglucosamine 1-phosphate (lipid X) and UMP by catalyzing the attack of water at the alpha-P atom. Involved in the biosynthesis of lipid A, a phosphorylated glycolipid that anchors the lipopolysaccharide to the outer membrane of the cell. The protein is UDP-2,3-diacylglucosamine hydrolase of Shigella sonnei (strain Ss046).